Here is a 363-residue protein sequence, read N- to C-terminus: 3-methyl-D-ornithine--L-lysine ligase (363 aa).

Lys-10 lines the ATP pocket. 11–12 (LQ) is a binding site for L-lysine. ATP contacts are provided by residues Asp-31, 49 to 50 (DV), and 72 to 73 (EN). Position 72 (Glu-72) interacts with L-lysine. An ATP-grasp domain is found at 85–269 (EEFSCPVLFD…LIELLFRAFG (185 aa)). Residues Lys-104, Lys-131, Ser-138, and 160–163 (EEYV) contribute to the ADP site. Residues 169–171 (SLE) and Asp-225 each bind D-ornithine. The Mg(2+) site is built by Glu-227, Glu-239, and Asp-241. Position 239 (Glu-239) interacts with ADP. D-ornithine contacts are provided by residues 243–248 (RFPSQT) and Glu-302. L-lysine-binding residues include Ser-246 and Glu-302.

This sequence belongs to the PylC family. The cofactor is Mg(2+).

It catalyses the reaction (3R)-3-methyl-D-ornithine + L-lysine + ATP = (3R)-3-methyl-D-ornithyl-N(6)-L-lysine + ADP + phosphate + H(+). It participates in amino-acid biosynthesis; L-pyrrolysine biosynthesis. Its function is as follows. Is required for the biosynthesis of pyrrolysine. Catalyzes the ATP-dependent ligation between (3R)-3-methyl-D-ornithine and L-lysine, leading to (3R)-3-methyl-D-ornithyl-N6-L-lysine. This chain is 3-methyl-D-ornithine--L-lysine ligase, found in Methanosarcina acetivorans (strain ATCC 35395 / DSM 2834 / JCM 12185 / C2A).